Here is a 391-residue protein sequence, read N- to C-terminus: MVTQNKKILIITGSFGNGHLQVTNSVVNQLNEMNLKHLSVIEHDLFMEAHPILTSICKKYYINSFKYFRNSYKQFYYSRPEDVNKCFYKYYGLNKLINLLIKEKPDLILLTFPTPVMSVLTEQFNMNIPIATVMTDYRLHKNWVTPHSSRYYVATPDLKQEFVNVGVPEDIIKITGIPISEQFDEDIDTKVWMHKNHLDPNRPTILMSAGAFGVSKGFDVMISDILERSPETQIVMICGRNKELKRALRQQFKEYANVLILGYTHHMNEWMASSHLMVTKPGGITISEALARKIPMIFLDPAPGQELENAHYFQSKGMGKIADTTEEAIQLITELTQDENALAHMAEQMQDLKVKYPTYKLCRDLLHLLDHSSQFEEIYGKVPMYAKLFIK.

Belongs to the glycosyltransferase 28 family. UgtP subfamily.

It localises to the cell membrane. It carries out the reaction a 1,2-diacyl-3-O-(beta-D-glucopyranosyl)-sn-glycerol + UDP-alpha-D-glucose = a 1,2-diacyl-3-O-(beta-D-Glc-(1-&gt;6)-beta-D-Glc)-sn-glycerol + UDP + H(+). The enzyme catalyses a 1,2-diacyl-sn-glycerol + UDP-alpha-D-glucose = a 1,2-diacyl-3-O-(beta-D-glucopyranosyl)-sn-glycerol + UDP + H(+). Its pathway is glycolipid metabolism; diglucosyl-diacylglycerol biosynthesis. Processive glucosyltransferase involved in the biosynthesis of both the bilayer- and non-bilayer-forming membrane glucolipids. Is able to successively transfer two glucosyl residues to diacylglycerol (DAG), thereby catalyzing the formation of beta-monoglucosyl-DAG (3-O-(beta-D-glucopyranosyl)-1,2-diacyl-sn-glycerol) and beta-diglucosyl-DAG (3-O-(beta-D-glucopyranosyl-beta-(1-&gt;6)-D-glucopyranosyl)-1,2-diacyl-sn-glycerol). Beta-diglucosyl-DAG is the predominant glycolipid found in Bacillales and is also used as a membrane anchor for lipoteichoic acid (LTA). This is Processive diacylglycerol beta-glucosyltransferase from Staphylococcus carnosus (strain TM300).